The sequence spans 122 residues: Truncated CrmB protein (122 aa).

In terms of biological role, the protein is truncated in this strain and presumably inactive. It has similarities with variola virus CrmB, but the product is inactivated due to several premature stop codons. This chain is Truncated CrmB protein (OPG002), found in Bos taurus (Bovine).